The following is a 175-amino-acid chain: Large ribosomal subunit protein bL17m (175 aa).

Residues 1–8 constitute a mitochondrion transit peptide; it reads MRLSVAAA. Residues 155–175 form a disordered region; it reads DLRQSQEASNHSSHTAQTPGI. The span at 161-175 shows a compositional bias: polar residues; it reads EASNHSSHTAQTPGI.

The protein belongs to the bacterial ribosomal protein bL17 family. As to quaternary structure, component of the mitochondrial large ribosomal subunit (mt-LSU). Mature mammalian 55S mitochondrial ribosomes consist of a small (28S) and a large (39S) subunit. The 28S small subunit contains a 12S ribosomal RNA (12S mt-rRNA) and 30 different proteins. The 39S large subunit contains a 16S rRNA (16S mt-rRNA), a copy of mitochondrial valine transfer RNA (mt-tRNA(Val)), which plays an integral structural role, and 52 different proteins. Detected in adrenal gland, mammary gland and adipose tissue.

The protein resides in the mitochondrion. The chain is Large ribosomal subunit protein bL17m (MRPL17) from Homo sapiens (Human).